We begin with the raw amino-acid sequence, 135 residues long: BolA-like protein 1 (135 aa).

Phosphoserine is present on S81. Residues 114 to 135 form a disordered region; sequence WKENPQLDTSPACLGGSKKSRN.

The protein belongs to the BolA/IbaG family. In terms of assembly, interacts with GLRX5.

Its subcellular location is the mitochondrion. Its function is as follows. Acts as a mitochondrial iron-sulfur (Fe-S) cluster assembly factor that facilitates (Fe-S) cluster insertion into a subset of mitochondrial proteins. Probably acts together with the monothiol glutaredoxin GLRX5. May protect cells against oxidative stress. In Bos taurus (Bovine), this protein is BolA-like protein 1 (BOLA1).